Here is a 393-residue protein sequence, read N- to C-terminus: CAI-1 autoinducer synthase (393 aa).

An N6-(pyridoxal phosphate)lysine modification is found at lysine 240.

This sequence belongs to the class-II pyridoxal-phosphate-dependent aminotransferase family. Pyridoxal 5'-phosphate is required as a cofactor.

Functionally, required for the synthesis of the quorum-sensing autoinducer CAI-1 ((S)-3-hydroxytridecan-4-one) which probably functions as an intragenus signal. The polypeptide is CAI-1 autoinducer synthase (cqsA) (Vibrio campbellii (strain ATCC BAA-1116)).